The sequence spans 465 residues: MENRCLPKKVPGFCSFRYGLAILLHFCNIVIMAQRVCLNLTMVAMVNKTEPPHLSNKSVAEMLDNVKNPVHSWSLDIQGLVLSSVFLGMVVIQVPVGYLSGAYPMEKIIGSSLFLSSVLSLLIPPAAQVGAALVIVCRVLQGIAQGAVSTGQHGIWVKWAPPLERGRLTSMTLSGFVMGPFIALLVSGFICDLLGWPMVFYIFGIVGCVLSLFWFILLFDDPNNHPYMSSSEKDYITSSLMQQVHSGRQSLPIKAMLKSLPLWAIILNSFAFIWSNNLLVTYTPTFISTTLHVNVRENGLLSSLPYLLAYICGIVAGQMSDFLLSRKIFSVVAVRKLFTTLGIFCPVIFVVCLLYLSYNFYSTVIFLTLANSTLSFSFCGQLINALDIAPRYYGFLKAVTALIGIFGGLISSTLAGLILNQDPEYAWHKNFFLMAGINVTCLAFYLLFAKGDIQDWAKETKTTRL.

Asparagine 39, asparagine 47, and asparagine 56 each carry an N-linked (GlcNAc...) asparagine glycan. 10 consecutive transmembrane segments (helical) span residues 79 to 99 (GLVL…VGYL), 117 to 137 (SVLS…VIVC), 176 to 196 (FVMG…LLGW), 199 to 219 (VFYI…ILLF), 260 to 280 (LPLW…NLLV), 299 to 319 (GLLS…AGQM), 337 to 357 (LFTT…LYLS), 363 to 383 (TVIF…GQLI), 399 to 419 (VTAL…GLIL), and 431 to 451 (FFLM…FAKG).

The protein belongs to the major facilitator superfamily. Sodium/anion cotransporter family. As to quaternary structure, interacts with PDZK1.

Its subcellular location is the apical cell membrane. The catalysed reaction is 3 Na(+)(out) + phosphate(out) = 3 Na(+)(in) + phosphate(in). The enzyme catalyses urate(out) = urate(in). Functionally, important for the resorption of phosphate by the kidney. May be involved in actively transporting phosphate into cells via Na(+) cotransport in the renal brush border membrane. Plays a role in urate transport in the kidney. This Rattus norvegicus (Rat) protein is Sodium-dependent phosphate transport protein 1 (Slc17a1).